We begin with the raw amino-acid sequence, 324 residues long: Hydroxylase/desaturase CTB9 (324 aa).

Polar residues predominate over residues 1 to 11 (MTSTITTTETL). Disordered regions lie at residues 1 to 33 (MTST…KELP) and 288 to 308 (TARR…EPRA).

Belongs to the asaB hydroxylase/desaturase family.

It functions in the pathway mycotoxin biosynthesis. In terms of biological role, hydroxylase/desaturase; part of the gene cluster that mediates the biosynthesis of cercosporin, a light-activated, non-host-selective toxin. The perylenequinone chromophore of cercosporin absorbs light energy to attain an electronically-activated triplet state and produces active oxygen species such as the hydroxyl radical, superoxide, hydrogen peroxide or singlet oxygen upon reaction with oxygen molecules. These reactive oxygen species cause damage to various cellular components including lipids, proteins and nucleic acids. The first step of cercosporin biosynthesis is performed by the polyketide synthase CTB1 which catalyzes the formation of nor-toralactone. The starter unit acyltransferase (SAT) domain of CTB1 initiates polyketide extension by the selective utilization of acetyl-CoA, which is elongated to the heptaketide in the beta-ketoacyl synthase (KS) domain by successive condensations with six malonyl units introduced by the malonyl acyltransferase (MAT) domain. The product template (PT) domain catalyzes C4-C9 and C2-C11 aldol cyclizations and dehydrations to a trihydroxynaphthalene, which is thought to be delivered to the thioesterase (TE) domain for product release. The bifunctional enzyme CTB3 then methylates nor-toralactone to toralactone before conducting an unusual oxidative aromatic ring opening. The O-methyltransferase CTB2 further methylates the nascent OH-6 of the CBT3 product, blocking further oxidation at this site before the reductase CTB6 reduces the 2-oxopropyl ketone at position C7, giving naphthalene. The FAD-dependent monooxygenase CTB5 in concert with the multicopper oxidase CTB12 are responsible for homodimerization of naphthalene with CTB7 installing the dioxepine moiety, finally producing cercosporin. The fasciclin domain-containing protein CTB11 might act with CTB5 and CTB12 whereas the roles of CTB9 and CTB10 have still to be elucidated. The protein is Hydroxylase/desaturase CTB9 of Cercospora beticola (Sugarbeet leaf spot fungus).